The chain runs to 348 residues: Ion-translocating oxidoreductase complex subunit D (348 aa).

The next 3 helical transmembrane spans lie at 20–39 (LMKWVAICALPGLLAQTYFF), 72–91 (ALRDYSAVVTAWLLSVAIPP), and 120–140 (PFNPAMVAYVVLLISFPVQMT). Thr-187 is subject to FMN phosphoryl threonine. 5 helical membrane-spanning segments follow: residues 214–234 (LAGVGWEWVNLAYLIGGLVLI), 241–261 (WHIPVAFLGSLTLFSLMFLMF), 266–286 (TASPTIHLLSGATMLGAFFIA), 300–320 (LVFGALIGGLVFIIRSWGGFP), and 321–341 (DGVAFAVLLANMCVPLIDYYT).

It belongs to the NqrB/RnfD family. In terms of assembly, the complex is composed of six subunits: RnfA, RnfB, RnfC, RnfD, RnfE and RnfG. Requires FMN as cofactor.

It localises to the cell inner membrane. Its function is as follows. Part of a membrane-bound complex that couples electron transfer with translocation of ions across the membrane. In Vibrio atlanticus (strain LGP32) (Vibrio splendidus (strain Mel32)), this protein is Ion-translocating oxidoreductase complex subunit D.